We begin with the raw amino-acid sequence, 599 residues long: Sodium-dependent phosphate transport protein 2C (599 aa).

The Cytoplasmic portion of the chain corresponds to 1-76 (MPSSLPGSQV…RRVAGSVLKA (76 aa)). Ser-4 is modified (phosphoserine). A helical membrane pass occupies residues 77-97 (CGLLGSLYFFICSLDVLSSAF). At 98 to 111 (QLLGSKVAGDIFKD) the chain is on the extracellular side. The chain crosses the membrane as a helical span at residues 112–132 (NVVLSNPVAGLVIGVLVTALV). Topologically, residues 133 to 188 (QSSSTSSSIVVSMVAAKLLTVRVSVPIIMGVNVGTSITSTLVSMAQSGDRDEFQRA) are cytoplasmic. The chain crosses the membrane as a helical span at residues 189 to 209 (FSGSAVHGIFNWLTVLVLLPL). Over 210–322 (ESATALLERL…FAGTELTDLA (113 aa)) the chain is Extracellular. 4 N-linked (GlcNAc...) asparagine glycosylation sites follow: Asn-265, Asn-268, Asn-286, and Asn-299. A disulfide bridge links Cys-276 with Cys-309. Residues 323 to 343 (VGCILLAGSLLVLCGCLVLIV) traverse the membrane as a helical segment. At 344–367 (KLLNSVLRGRVAQVVRTVINADFP) the chain is on the cytoplasmic side. Residues 368 to 388 (FPLGWLGGYLAVLAGAGLTFA) form a helical membrane-spanning segment. At 389-445 (LQSSSVFTAAVVPLMGVGVISLDRAYPLLLGSNIGTTTTALLAALASPADRMLSALQ) the chain is on the extracellular side. A helical transmembrane segment spans residues 446 to 466 (VALIHFFFNLAGILLWYLVPA). Topologically, residues 467-485 (LRLPIPLARHFGVVTARYR) are cytoplasmic. Residues 486–506 (WVAGVYLLLGFLLLPLAAFGL) form a helical membrane-spanning segment. The Extracellular portion of the chain corresponds to 507–510 (SLAG). Residues 511-531 (GMELAAVGGPLVGLVLLVILV) form a helical membrane-spanning segment. The Cytoplasmic segment spans residues 532–599 (TVLQRRRPAW…NPEILASQQL (68 aa)).

The protein belongs to the SLC34A transporter family. In terms of tissue distribution, expressed only in the kidney.

The protein resides in the apical cell membrane. It catalyses the reaction 2 Na(+)(out) + phosphate(out) = 2 Na(+)(in) + phosphate(in). In terms of biological role, involved in actively transporting phosphate into cells via Na(+) cotransport in the renal brush border membrane. The cotransport has a Na(+):Pi stoichiometry of 2:1 and is electroneutral. The polypeptide is Sodium-dependent phosphate transport protein 2C (SLC34A3) (Homo sapiens (Human)).